We begin with the raw amino-acid sequence, 380 residues long: Cytochrome b (380 aa).

Transmembrane regions (helical) follow at residues 34 to 54, 78 to 99, 114 to 134, and 179 to 199; these read FGSL…LLAM, WLIR…YLHI, WNTG…GYVL, and FFAL…IHLT. Heme b-binding residues include His84 and His98. 2 residues coordinate heme b: His183 and His197. Position 202 (His202) interacts with a ubiquinone. Helical transmembrane passes span 227–247, 289–309, 321–341, and 348–368; these read SKDI…ALLS, LGGV…PFLH, LSQA…WIGS, and FIII…ILLP.

It belongs to the cytochrome b family. The cytochrome bc1 complex contains 11 subunits: 3 respiratory subunits (MT-CYB, CYC1 and UQCRFS1), 2 core proteins (UQCRC1 and UQCRC2) and 6 low-molecular weight proteins (UQCRH/QCR6, UQCRB/QCR7, UQCRQ/QCR8, UQCR10/QCR9, UQCR11/QCR10 and a cleavage product of UQCRFS1). This cytochrome bc1 complex then forms a dimer. It depends on heme b as a cofactor.

The protein localises to the mitochondrion inner membrane. Its function is as follows. Component of the ubiquinol-cytochrome c reductase complex (complex III or cytochrome b-c1 complex) that is part of the mitochondrial respiratory chain. The b-c1 complex mediates electron transfer from ubiquinol to cytochrome c. Contributes to the generation of a proton gradient across the mitochondrial membrane that is then used for ATP synthesis. In Phalcoboenus australis (Striated caracara), this protein is Cytochrome b (MT-CYB).